Consider the following 174-residue polypeptide: NADH-quinone oxidoreductase subunit B 2 (174 aa).

[4Fe-4S] cluster is bound by residues Cys51, Cys52, Cys116, and Cys145.

This sequence belongs to the complex I 20 kDa subunit family. As to quaternary structure, NDH-1 is composed of 14 different subunits. Subunits NuoB, C, D, E, F, and G constitute the peripheral sector of the complex. [4Fe-4S] cluster serves as cofactor.

It localises to the cell inner membrane. The enzyme catalyses a quinone + NADH + 5 H(+)(in) = a quinol + NAD(+) + 4 H(+)(out). In terms of biological role, NDH-1 shuttles electrons from NADH, via FMN and iron-sulfur (Fe-S) centers, to quinones in the respiratory chain. The immediate electron acceptor for the enzyme in this species is believed to be ubiquinone. Couples the redox reaction to proton translocation (for every two electrons transferred, four hydrogen ions are translocated across the cytoplasmic membrane), and thus conserves the redox energy in a proton gradient. This Thermodesulfovibrio yellowstonii (strain ATCC 51303 / DSM 11347 / YP87) protein is NADH-quinone oxidoreductase subunit B 2.